Reading from the N-terminus, the 1002-residue chain is Isoleucine--tRNA ligase (1002 aa).

The 'HIGH' region signature appears at 70–80 (PYANGNIHIGH). Residue E630 participates in L-isoleucyl-5'-AMP binding. The short motif at 671-675 (KMSKS) is the 'KMSKS' region element. K674 is an ATP binding site.

The protein belongs to the class-I aminoacyl-tRNA synthetase family. IleS type 1 subfamily. As to quaternary structure, monomer.

It is found in the cytoplasm. It carries out the reaction tRNA(Ile) + L-isoleucine + ATP = L-isoleucyl-tRNA(Ile) + AMP + diphosphate. Its function is as follows. Catalyzes the attachment of isoleucine to tRNA(Ile). As IleRS can inadvertently accommodate and process structurally similar amino acids such as valine, to avoid such errors it has two additional distinct tRNA(Ile)-dependent editing activities. One activity is designated as 'pretransfer' editing and involves the hydrolysis of activated Val-AMP. The other activity is designated 'posttransfer' editing and involves deacylation of mischarged Val-tRNA(Ile). This Bradyrhizobium diazoefficiens (strain JCM 10833 / BCRC 13528 / IAM 13628 / NBRC 14792 / USDA 110) protein is Isoleucine--tRNA ligase.